Reading from the N-terminus, the 354-residue chain is Uroporphyrinogen decarboxylase (354 aa).

Substrate is bound by residues 30-34 (RQAGR), Asp79, Tyr154, Ser209, and His333.

The protein belongs to the uroporphyrinogen decarboxylase family. As to quaternary structure, homodimer.

It localises to the cytoplasm. The catalysed reaction is uroporphyrinogen III + 4 H(+) = coproporphyrinogen III + 4 CO2. It functions in the pathway porphyrin-containing compound metabolism; protoporphyrin-IX biosynthesis; coproporphyrinogen-III from 5-aminolevulinate: step 4/4. Functionally, catalyzes the decarboxylation of four acetate groups of uroporphyrinogen-III to yield coproporphyrinogen-III. The protein is Uroporphyrinogen decarboxylase of Mycolicibacterium gilvum (strain PYR-GCK) (Mycobacterium gilvum (strain PYR-GCK)).